The primary structure comprises 194 residues: Peptidyl-tRNA hydrolase (194 aa).

Position 16 (tyrosine 16) interacts with tRNA. The active-site Proton acceptor is histidine 21. Residues phenylalanine 67, asparagine 69, and asparagine 115 each coordinate tRNA.

It belongs to the PTH family. In terms of assembly, monomer.

It is found in the cytoplasm. It catalyses the reaction an N-acyl-L-alpha-aminoacyl-tRNA + H2O = an N-acyl-L-amino acid + a tRNA + H(+). In terms of biological role, hydrolyzes ribosome-free peptidyl-tRNAs (with 1 or more amino acids incorporated), which drop off the ribosome during protein synthesis, or as a result of ribosome stalling. Its function is as follows. Catalyzes the release of premature peptidyl moieties from peptidyl-tRNA molecules trapped in stalled 50S ribosomal subunits, and thus maintains levels of free tRNAs and 50S ribosomes. The chain is Peptidyl-tRNA hydrolase from Shigella boydii serotype 18 (strain CDC 3083-94 / BS512).